Consider the following 511-residue polypeptide: Maturase K (511 aa).

The protein belongs to the intron maturase 2 family. MatK subfamily.

Its subcellular location is the plastid. It localises to the chloroplast. Functionally, usually encoded in the trnK tRNA gene intron. Probably assists in splicing its own and other chloroplast group II introns. This chain is Maturase K, found in Lolium perenne (Perennial ryegrass).